Reading from the N-terminus, the 271-residue chain is Autophagy-related protein 27 (271 aa).

The N-terminal stretch at Met1 to Ala19 is a signal peptide. Positions Leu20–Lys166 constitute an MRH domain. Topologically, residues Leu20 to Thr197 are lumenal. Disulfide bonds link Cys22-Cys60, Cys71-Cys78, and Cys135-Cys164. The segment at Pro161–Pro190 is disordered. Basic and acidic residues predominate over residues Lys166–Lys189. A helical membrane pass occupies residues Leu198–Val218. Residues Ser219–Val271 are Cytoplasmic-facing.

It belongs to the ATG27 family. As to quaternary structure, forms a complex with ATG9 and ATG23.

The protein localises to the cytoplasmic vesicle membrane. It is found in the golgi apparatus membrane. It localises to the mitochondrion membrane. Its subcellular location is the preautophagosomal structure membrane. Functionally, effector of VPS34 phosphatidylinositol 3-phosphate kinase signaling. Regulates the cytoplasm to vacuole transport (Cvt) vesicle formation. Plays a role in ATG protein retrieval from the pre-autophagosomal structure (PAS) and is especially required for autophagy-dependent cycling of ATG9. This Saccharomyces cerevisiae (strain YJM789) (Baker's yeast) protein is Autophagy-related protein 27 (ATG27).